The chain runs to 398 residues: Acetate kinase (398 aa).

A Mg(2+)-binding site is contributed by Asn7. Lys14 lines the ATP pocket. Arg91 lines the substrate pocket. Residue Asp148 is the Proton donor/acceptor of the active site. ATP contacts are provided by residues 208-212 (HLGNG), 283-285 (DFR), and 331-335 (GIGEH). Mg(2+) is bound at residue Glu386.

The protein belongs to the acetokinase family. As to quaternary structure, homodimer. Mg(2+) is required as a cofactor. Requires Mn(2+) as cofactor.

Its subcellular location is the cytoplasm. It catalyses the reaction acetate + ATP = acetyl phosphate + ADP. Its pathway is metabolic intermediate biosynthesis; acetyl-CoA biosynthesis; acetyl-CoA from acetate: step 1/2. In terms of biological role, catalyzes the formation of acetyl phosphate from acetate and ATP. Can also catalyze the reverse reaction. The polypeptide is Acetate kinase (Clostridium botulinum (strain Alaska E43 / Type E3)).